Reading from the N-terminus, the 255-residue chain is Protein NEN4 (255 aa).

An Exonuclease domain is found at valine 11–leucine 174. Mg(2+) contacts are provided by aspartate 14 and glutamate 16. The active-site Proton donor/acceptor is histidine 161. Aspartate 166 provides a ligand contact to Mg(2+).

Mg(2+) serves as cofactor. In terms of tissue distribution, expressed in the sieve elements and phloem pole pericycle cells.

The protein resides in the nucleus. Its function is as follows. Probable exonuclease required for enuclation of sieve elements. The chain is Protein NEN4 from Arabidopsis thaliana (Mouse-ear cress).